We begin with the raw amino-acid sequence, 156 residues long: WASQVSENRPVCKAIIQGKQFEGLVDTEADVSIIALNQWPKNWPKQKAVTGLVGIGTASEVYQSTEILHCLGPDNQESTVQPMITSIPLNLWGQDLLQQWGAEITMPAPLYSPTSQKIMTKMGYIPGKGLGKNEDGIKVPVEAKINQKREGIGYPF.

The region spanning 21–96 (FEGLVDTEAD…IPLNLWGQDL (76 aa)) is the Peptidase A2 domain. Asp-26 is an active-site residue. One can recognise a G-patch domain in the interval 111–156 (YSPTSQKIMTKMGYIPGKGLGKNEDGIKVPVEAKINQKREGIGYPF).

This sequence belongs to the peptidase A2 family. HERV class-II K(HML-2) subfamily. In terms of assembly, active as a homodimer. Autoproteolytically processed at the N-terminus. Expected C-terminal autoprocessing not detected. The sequence shown is that of the processed Pro protein.

It carries out the reaction Processing at the authentic HIV-1 PR recognition site and release of the mature p17 matrix and the p24 capsid protein, as a result of the cleavage of the -SQNY-|-PIVQ- cleavage site.. In terms of biological role, retroviral proteases have roles in the processing of the primary translation products and the maturation of the viral particle. Endogenous Pro proteins may have kept, lost or modified their original function during evolution. The protein is Endogenous retrovirus group K member 104 Pro protein (HERV-K104) of Homo sapiens (Human).